The chain runs to 60 residues: Large ribosomal subunit protein bL32 (60 aa).

Belongs to the bacterial ribosomal protein bL32 family.

This is Large ribosomal subunit protein bL32 from Paramagnetospirillum magneticum (strain ATCC 700264 / AMB-1) (Magnetospirillum magneticum).